We begin with the raw amino-acid sequence, 224 residues long: Deoxyribose-phosphate aldolase (224 aa).

Asp92 serves as the catalytic Proton donor/acceptor. Lys154 serves as the catalytic Schiff-base intermediate with acetaldehyde. Lys183 acts as the Proton donor/acceptor in catalysis.

Belongs to the DeoC/FbaB aldolase family. DeoC type 1 subfamily.

The protein localises to the cytoplasm. The enzyme catalyses 2-deoxy-D-ribose 5-phosphate = D-glyceraldehyde 3-phosphate + acetaldehyde. It participates in carbohydrate degradation; 2-deoxy-D-ribose 1-phosphate degradation; D-glyceraldehyde 3-phosphate and acetaldehyde from 2-deoxy-alpha-D-ribose 1-phosphate: step 2/2. Functionally, catalyzes a reversible aldol reaction between acetaldehyde and D-glyceraldehyde 3-phosphate to generate 2-deoxy-D-ribose 5-phosphate. The polypeptide is Deoxyribose-phosphate aldolase (Actinobacillus succinogenes (strain ATCC 55618 / DSM 22257 / CCUG 43843 / 130Z)).